The following is a 404-amino-acid chain: Exodeoxyribonuclease 7 large subunit (404 aa).

It belongs to the XseA family. As to quaternary structure, heterooligomer composed of large and small subunits.

Its subcellular location is the cytoplasm. It catalyses the reaction Exonucleolytic cleavage in either 5'- to 3'- or 3'- to 5'-direction to yield nucleoside 5'-phosphates.. Bidirectionally degrades single-stranded DNA into large acid-insoluble oligonucleotides, which are then degraded further into small acid-soluble oligonucleotides. This is Exodeoxyribonuclease 7 large subunit from Fusobacterium nucleatum subsp. nucleatum (strain ATCC 25586 / DSM 15643 / BCRC 10681 / CIP 101130 / JCM 8532 / KCTC 2640 / LMG 13131 / VPI 4355).